A 93-amino-acid chain; its full sequence is MSRSVKKGPALCPKLMKKVEVASATNQKSIIKTWARWSTITPLMVGLNVGVHDGRRHVPIYITENMVGHRLGEFTTTRNFRGHAKAEKVSQVK.

This sequence belongs to the universal ribosomal protein uS19 family.

Functionally, protein S19 forms a complex with S13 that binds strongly to the 16S ribosomal RNA. The polypeptide is Small ribosomal subunit protein uS19 (Dehalococcoides mccartyi (strain ATCC BAA-2266 / KCTC 15142 / 195) (Dehalococcoides ethenogenes (strain 195))).